Here is a 207-residue protein sequence, read N- to C-terminus: Ankyrin repeat-containing protein P1E11.10 (207 aa).

ANK repeat units follow at residues 36-65 and 69-98; these read NGYT…DINI and DGET…TVKN.

Its subcellular location is the cytoplasm. The protein resides in the nucleus. This chain is Ankyrin repeat-containing protein P1E11.10, found in Schizosaccharomyces pombe (strain 972 / ATCC 24843) (Fission yeast).